We begin with the raw amino-acid sequence, 472 residues long: UDP-N-acetylmuramate--L-alanine ligase (472 aa).

122 to 128 contacts ATP; that stretch reads GSHGKTT.

This sequence belongs to the MurCDEF family.

It localises to the cytoplasm. It carries out the reaction UDP-N-acetyl-alpha-D-muramate + L-alanine + ATP = UDP-N-acetyl-alpha-D-muramoyl-L-alanine + ADP + phosphate + H(+). The protein operates within cell wall biogenesis; peptidoglycan biosynthesis. Its function is as follows. Cell wall formation. This chain is UDP-N-acetylmuramate--L-alanine ligase, found in Prochlorococcus marinus (strain SARG / CCMP1375 / SS120).